Consider the following 418-residue polypeptide: Glutamyl-tRNA(Gln) amidotransferase subunit D (418 aa).

The 327-residue stretch at 81-407 folds into the Asparaginase/glutaminase domain; the sequence is PDVKIISTGG…EEAKEMVKKS (327 aa). Residues threonine 91, threonine 166, aspartate 167, and lysine 243 contribute to the active site.

The protein belongs to the asparaginase 1 family. GatD subfamily. In terms of assembly, heterodimer of GatD and GatE.

The catalysed reaction is L-glutamyl-tRNA(Gln) + L-glutamine + ATP + H2O = L-glutaminyl-tRNA(Gln) + L-glutamate + ADP + phosphate + H(+). In terms of biological role, allows the formation of correctly charged Gln-tRNA(Gln) through the transamidation of misacylated Glu-tRNA(Gln) in organisms which lack glutaminyl-tRNA synthetase. The reaction takes place in the presence of glutamine and ATP through an activated gamma-phospho-Glu-tRNA(Gln). The GatDE system is specific for glutamate and does not act on aspartate. In Archaeoglobus fulgidus (strain ATCC 49558 / DSM 4304 / JCM 9628 / NBRC 100126 / VC-16), this protein is Glutamyl-tRNA(Gln) amidotransferase subunit D.